The following is a 470-amino-acid chain: MNPNQKIITIGSISIAIGIISLMLQIGNIISIWASHSIQTGSQNHTGICNQRIITYENSTWVNHTYVNINNTNVVAGKDKTSVTLAGNSSLCSISGWAIYTKDNSIRIGSKGDVFVIREPFISCSHLECRTFFLTQGALLNDKHSNGTVKDRSPYRALMSCPLGEAPSPYNSKFESVAWSASACHDGMGWLTIGISGPDNGAVAVLKYNGIITETIKSWKKRILRTQESECVCVNGSCFTIMTDGPSNGAASYKIFKIEKGKVTKSIELNAPNFHYEECSCYPDTGTVMCVCRDNWHGSNRPWVSFNQNLDYQIGYICSGVFGDNPRPKDGEGSCNPVTVDGADGVKGFSYKYGNGVWIGRTKSNRLRKGFEMIWDPNGWTDTDSNFSVKQDVVAITDWSGYSGSFVQHPELTGLDCIRPCFWVELVRGLPRENTTIWTSGSSISFCGVNSDTANWSWPDGAELPFTIDK.

At 1-6 (MNPNQK) the chain is on the intravirion side. Residues 7 to 27 (IITIGSISIAIGIISLMLQIG) traverse the membrane as a helical segment. Residues 11 to 33 (GSISIAIGIISLMLQIGNIISIW) are involved in apical transport and lipid raft association. Over 28-470 (NIISIWASHS…GAELPFTIDK (443 aa)) the chain is Virion surface. Residues 36-90 (HSIQTGSQNHTGICNQRIITYENSTWVNHTYVNINNTNVVAGKDKTSVTLAGNSS) are hypervariable stalk region. Asparagine 44, asparagine 58, asparagine 63, asparagine 70, and asparagine 88 each carry an N-linked (GlcNAc...) asparagine; by host glycan. Residues 91-470 (LCSISGWAIY…GAELPFTIDK (380 aa)) form a head of neuraminidase region. Intrachain disulfides connect cysteine 92–cysteine 417, cysteine 124–cysteine 129, cysteine 184–cysteine 231, cysteine 233–cysteine 238, cysteine 279–cysteine 292, cysteine 281–cysteine 290, cysteine 318–cysteine 335, and cysteine 421–cysteine 447. Substrate is bound at residue arginine 118. Asparagine 146 carries an N-linked (GlcNAc...) asparagine; by host glycan. Aspartate 151 (proton donor/acceptor) is an active-site residue. Arginine 152 serves as a coordination point for substrate. An N-linked (GlcNAc...) asparagine; by host glycan is attached at asparagine 235. Position 277–278 (277–278 (EE)) interacts with substrate. Arginine 293 serves as a coordination point for substrate. Residues aspartate 294, glycine 298, and aspartate 324 each contribute to the Ca(2+) site. Residue arginine 368 participates in substrate binding. The N-linked (GlcNAc...) asparagine; by host glycan is linked to asparagine 386. Catalysis depends on tyrosine 402, which acts as the Nucleophile. 2 N-linked (GlcNAc...) asparagine; by host glycosylation sites follow: asparagine 434 and asparagine 455.

It belongs to the glycosyl hydrolase 34 family. As to quaternary structure, homotetramer. Ca(2+) is required as a cofactor. Post-translationally, N-glycosylated.

The protein localises to the virion membrane. It localises to the host apical cell membrane. It catalyses the reaction Hydrolysis of alpha-(2-&gt;3)-, alpha-(2-&gt;6)-, alpha-(2-&gt;8)- glycosidic linkages of terminal sialic acid residues in oligosaccharides, glycoproteins, glycolipids, colominic acid and synthetic substrates.. Inhibited by the neuraminidase inhibitors zanamivir (Relenza) and oseltamivir (Tamiflu). These drugs interfere with the release of progeny virus from infected cells and are effective against all influenza strains. Resistance to neuraminidase inhibitors is quite rare. Functionally, catalyzes the removal of terminal sialic acid residues from viral and cellular glycoconjugates. Cleaves off the terminal sialic acids on the glycosylated HA during virus budding to facilitate virus release. Additionally helps virus spread through the circulation by further removing sialic acids from the cell surface. These cleavages prevent self-aggregation and ensure the efficient spread of the progeny virus from cell to cell. Otherwise, infection would be limited to one round of replication. Described as a receptor-destroying enzyme because it cleaves a terminal sialic acid from the cellular receptors. May facilitate viral invasion of the upper airways by cleaving the sialic acid moieties on the mucin of the airway epithelial cells. Likely to plays a role in the budding process through its association with lipid rafts during intracellular transport. May additionally display a raft-association independent effect on budding. Plays a role in the determination of host range restriction on replication and virulence. Sialidase activity in late endosome/lysosome traffic seems to enhance virus replication. The chain is Neuraminidase from Influenza A virus (strain A/New Zealand:South Canterbury/35/2000 H1N1).